Reading from the N-terminus, the 327-residue chain is Arabinose 5-phosphate isomerase KdsD (327 aa).

The SIS domain maps to 41–183 (ILENNRDKSR…AIALLKAKNF (143 aa)). Residues 74-75 (GT), His81, His87, 113-122 (GLLPMIKHLD), 147-149 (HVD), Thr221, and Glu273 each bind substrate. Residue His81 participates in Zn(2+) binding. The CBS 1 domain occupies 209-268 (MRKGNEIPIVKPTDNIRKAILEISDKGVGNTLVAENNTLLGIFTDGDLRRMFEAESFNSQ). The CBS 2 domain maps to 275–327 (MTKNPKSISKEEMAITALEKMEKYEITSLAVVDNGHNILGIVTMHDLIKLELR).

The protein belongs to the SIS family. GutQ/KpsF subfamily. As to quaternary structure, homotetramer.

The catalysed reaction is D-arabinose 5-phosphate = D-ribulose 5-phosphate. It participates in carbohydrate biosynthesis; 3-deoxy-D-manno-octulosonate biosynthesis; 3-deoxy-D-manno-octulosonate from D-ribulose 5-phosphate: step 1/3. Its pathway is bacterial outer membrane biogenesis; lipopolysaccharide biosynthesis. Its activity is regulated as follows. Inhibited by hydroxamates, mimicking the putative enediol reaction intermediate. Most potent inhibition, with an IC(50) of 0.7 uM, is obtained with the 4 carbon-based hydroxamate containing acetyl moieties. Functionally, involved in the biosynthesis of 3-deoxy-D-manno-octulosonate (KDO), a unique 8-carbon sugar component of lipopolysaccharides (LPSs). Catalyzes the reversible aldol-ketol isomerization between D-ribulose 5-phosphate (Ru5P) and D-arabinose 5-phosphate (A5P). This is Arabinose 5-phosphate isomerase KdsD (kdsD) from Francisella tularensis subsp. tularensis (strain SCHU S4 / Schu 4).